A 350-amino-acid polypeptide reads, in one-letter code: Arginine N-succinyltransferase (350 aa).

Succinyl-CoA is bound at residue L125. Residue H229 is the Proton donor of the active site.

It belongs to the arginine N-succinyltransferase family.

It catalyses the reaction succinyl-CoA + L-arginine = N(2)-succinyl-L-arginine + CoA + H(+). It participates in amino-acid degradation; L-arginine degradation via AST pathway; L-glutamate and succinate from L-arginine: step 1/5. Functionally, catalyzes the transfer of succinyl-CoA to arginine to produce N(2)-succinylarginine. The polypeptide is Arginine N-succinyltransferase (Yersinia pseudotuberculosis serotype O:3 (strain YPIII)).